The following is a 354-amino-acid chain: 3'-5' exonuclease (354 aa).

The tract at residues Met-1–Lys-120 is disordered. 2 stretches are compositionally biased toward basic and acidic residues: residues Lys-13–Lys-30 and Lys-37–Ala-50. Over residues Thr-59–Arg-70 the composition is skewed to basic residues. Residues Lys-71–Pro-91 are compositionally biased toward basic and acidic residues. 3 positions are modified to phosphoserine: Ser-104, Ser-110, and Ser-112. The 166-residue stretch at Trp-149–Arg-314 folds into the 3'-5' exonuclease domain. Residues Asp-163, Glu-165, and Asp-301 each coordinate Mg(2+).

This sequence belongs to the WRNexo family.

The protein resides in the nucleus. In terms of biological role, has exonuclease activity on both single-stranded and duplex templates bearing overhangs, but not blunt ended duplex DNA, and cleaves in a 3'-5' direction. Essential for the formation of DNA replication focal centers. Has an important role in maintaining genome stability. This Drosophila simulans (Fruit fly) protein is 3'-5' exonuclease.